Here is an 880-residue protein sequence, read N- to C-terminus: Chaperone protein ClpB 1 (880 aa).

The region spanning 6 to 148 is the Clp R domain; sequence PNKFTDKAWE…EASIKAVRGS (143 aa). Repeat stretches follow at residues 9 to 74 and 85 to 148; these read FTDK…TQRQ and LGRS…VRGS. The tract at residues 161-343 is NBD1; that stretch reads EALQKFGRDL…RRFQQVYVDQ (183 aa). 208–215 provides a ligand contact to ATP; the sequence is GEPGVGKT. The interval 344–554 is linker; that stretch reads PSVENTISIL…IAEIVAKWTG (211 aa). The stretch at 394–530 forms a coiled coil; it reads IDLVDEAAAQ…KEAKLLELQS (137 aa). The interval 564-775 is NBD2; that stretch reads ERQKLLQLES…RVDDTILFHA (212 aa). Residue 614–621 participates in ATP binding; it reads GPTGVGKT. The tract at residues 776–880 is C-terminal; it reads LSRSEMSHII…VKVSVTQITT (105 aa).

It belongs to the ClpA/ClpB family. In terms of assembly, homohexamer. The oligomerization is ATP-dependent.

It localises to the cytoplasm. Part of a stress-induced multi-chaperone system, it is involved in the recovery of the cell from heat-induced damage, in cooperation with DnaK, DnaJ and GrpE. Acts before DnaK, in the processing of protein aggregates. Protein binding stimulates the ATPase activity; ATP hydrolysis unfolds the denatured protein aggregates, which probably helps expose new hydrophobic binding sites on the surface of ClpB-bound aggregates, contributing to the solubilization and refolding of denatured protein aggregates by DnaK. The polypeptide is Chaperone protein ClpB 1 (clpB1) (Nostoc sp. (strain PCC 7120 / SAG 25.82 / UTEX 2576)).